Reading from the N-terminus, the 109-residue chain is Nucleoid-associated protein MADE_1013280 (109 aa).

The interval 86–109 (TSKEKMGDVTGGMPLPPGFKMPGF) is disordered. A compositionally biased stretch (pro residues) spans 99 to 109 (PLPPGFKMPGF).

The protein belongs to the YbaB/EbfC family. As to quaternary structure, homodimer.

Its subcellular location is the cytoplasm. It localises to the nucleoid. Its function is as follows. Binds to DNA and alters its conformation. May be involved in regulation of gene expression, nucleoid organization and DNA protection. This Alteromonas mediterranea (strain DSM 17117 / CIP 110805 / LMG 28347 / Deep ecotype) protein is Nucleoid-associated protein MADE_1013280.